We begin with the raw amino-acid sequence, 422 residues long: Elongation factor 1-alpha (422 aa).

Positions K5 to S221 constitute a tr-type G domain. Positions G14 to S21 are G1. G14–S21 provides a ligand contact to GTP. S21 contributes to the Mg(2+) binding site. The interval G70–D74 is G2. Residues D91–G94 form a G3 region. GTP-binding positions include D91–H95 and N146–D149. The tract at residues N146–D149 is G4. The segment at S185–F187 is G5.

Belongs to the TRAFAC class translation factor GTPase superfamily. Classic translation factor GTPase family. EF-Tu/EF-1A subfamily.

The protein localises to the cytoplasm. The enzyme catalyses GTP + H2O = GDP + phosphate + H(+). GTP hydrolase that promotes the GTP-dependent binding of aminoacyl-tRNA to the A-site of ribosomes during protein biosynthesis. This is Elongation factor 1-alpha from Methanosarcina barkeri (strain Fusaro / DSM 804).